Consider the following 745-residue polypeptide: Polyribonucleotide nucleotidyltransferase (745 aa).

Mg(2+) is bound by residues D487 and D493. The 60-residue stretch at 554–613 (PSSTTVKIDKDKIKDIIGPGGKIIKEICETSNAKIDISDDGTVSIYASDRDKIKIALDKI) folds into the KH domain. Residues 623-691 (GEIFNGTVMK…NKGKAKLTIK (69 aa)) enclose the S1 motif domain. The tract at residues 693 to 732 (AYKDHSSNNTKQKNNVKDDSESEQRRDTSKKRTWNEDNNT) is disordered. Residues 707-719 (NVKDDSESEQRRD) show a composition bias toward basic and acidic residues.

Belongs to the polyribonucleotide nucleotidyltransferase family. Requires Mg(2+) as cofactor.

Its subcellular location is the cytoplasm. The catalysed reaction is RNA(n+1) + phosphate = RNA(n) + a ribonucleoside 5'-diphosphate. Functionally, involved in mRNA degradation. Catalyzes the phosphorolysis of single-stranded polyribonucleotides processively in the 3'- to 5'-direction. The protein is Polyribonucleotide nucleotidyltransferase of Rickettsia prowazekii (strain Madrid E).